A 1089-amino-acid polypeptide reads, in one-letter code: MTDDSLKIGNGLPLVGPGTDVGISSLPMLGYLGKNYASAKVTTDGHCPACRAKGKLSALKPYRISFQESVFLCEDLQCIYPLGSESLTNLISPDSEDCPTPSKPQKRKRLETNCRNSPLPVHSKKTRSHIVTDSEPIVNGKYNGEVCDDFSASFPDTSAHQDPASTAASVEQSEALEADDVVVAATEDPATVSVTSELEMPAKSRCLPLCQTLCVQWKNTQALCWLDCILSALVHLEVLRKTVLEACSREECVFGRLFEMYHQADELLHTHHLHGVTGEDCKKLTSEIFTEIDTCLNKVRDEIFAKLQPKLRCTLGDMESPVFALPVLLKLEPHVESLFTYSFSWNFECSHCGHQYQNRCVKSLVTFTNIVPEWHPLNAAHFGPCNSCNSKSQIRKMVLERASPILMLHFVEGLPRRDLQHYAFHFEGSLYQVTSVIQYQANNHFITWFLDADGSWLECDDLKGPCAKRHVTCEVPASETHIVIWERKSQVPIEEAACLPCMKPNVQPVSGEEQPTCPALCSLAGTATSEPSVAHPTSMAGAPQTLPEIQAVAHGDSVLSGAKGMVDSILPSALEETIQETASVSQVDSKDCLLEDKPVAGSAALVRVLAFQPQDSPGSSGSSLVSSLCEGKLVAPCVDSSFPSQAVSTDLQAVLSQAGDTVVPNPVTDAPVPVLVQELKSLATEKDSQTQLLPLKTEKLDPEQPGKSQASNLRKRETTASSKTVAARSAQNQPRKEDQKRAFVGSWVKGLLSRGGAFMPTCVLSQSRAVSDLQPSVKGASNFDGFKTKSISRRSKRMSRKAKHMEELSPRNSSPPLSWTAALTQAAENATSALLREQEGSRPAPLRHRSPGNESAISPASRGDAAEDQVHKLRLKLLKKLKAKKKKLAALISSPHREPSLSDHSEPASHCGTPASDQSEPVSHCGSPNDCESIEDLLKELQHQIDLADSKSGCTSAPDATSNNSQSHEEILAELLSPTAMSEPSESGELELRYLEMGDSTPAQAPSEFSVVSLNTCLKQDHDYCSPEKGQREVDLHSVMDSACIRTLNLGSPMKTDIFDDFFSTSALNSLTNDTLDIPHFDDSLFENC.

The disordered stretch occupies residues 90 to 128; sequence LISPDSEDCPTPSKPQKRKRLETNCRNSPLPVHSKKTRS. The USP domain occupies 215 to 488; sequence VQWKNTQALC…ETHIVIWERK (274 aa). Cys224 acts as the Nucleophile in catalysis. Residues 224–483 form an SUMO-binding region; the sequence is CWLDCILSAL…EVPASETHIV (260 aa). His444 acts as the Proton acceptor in catalysis. Disordered stretches follow at residues 687–739, 791–817, 835–868, and 891–928; these read DSQT…KEDQ, ISRR…SPPL, LREQ…AAED, and LISS…CGSP. Residues 719–733 are compositionally biased toward polar residues; the sequence is TASSKTVAARSAQNQ. Basic residues predominate over residues 791–803; that stretch reads ISRRSKRMSRKAK. Position 894 is a phosphoserine (Ser894). The span at 895 to 907 shows a compositional bias: basic and acidic residues; it reads PHREPSLSDHSEP.

The protein belongs to the peptidase C19 family. In terms of assembly, interacts with ELL.

The protein localises to the nucleus. It is found in the cajal body. In terms of biological role, SUMO-specific isopeptidase involved in protein desumoylation. Specifically binds SUMO proteins with a higher affinity for SUMO2 and SUMO3 which it cleaves more efficiently. Also able to process full-length SUMO proteins to their mature forms. Plays a key role in RNA polymerase-II-mediated snRNA transcription in the Cajal bodies. Is a component of complexes that can bind to U snRNA genes. In Mus musculus (Mouse), this protein is SUMO-specific isopeptidase USPL1 (Uspl1).